The following is a 341-amino-acid chain: Ferredoxin--NADP reductase (341 aa).

FAD is bound by residues aspartate 38, glutamine 46, tyrosine 51, valine 91, phenylalanine 125, aspartate 292, and threonine 333.

Belongs to the ferredoxin--NADP reductase type 2 family. As to quaternary structure, homodimer. FAD is required as a cofactor.

It catalyses the reaction 2 reduced [2Fe-2S]-[ferredoxin] + NADP(+) + H(+) = 2 oxidized [2Fe-2S]-[ferredoxin] + NADPH. The polypeptide is Ferredoxin--NADP reductase (Gluconacetobacter diazotrophicus (strain ATCC 49037 / DSM 5601 / CCUG 37298 / CIP 103539 / LMG 7603 / PAl5)).